The following is a 61-amino-acid chain: uncharacterized protein (61 aa).

This is an uncharacterized protein from Archaeoglobus fulgidus (strain ATCC 49558 / DSM 4304 / JCM 9628 / NBRC 100126 / VC-16).